A 188-amino-acid polypeptide reads, in one-letter code: Elongation factor P-like protein (188 aa).

This sequence belongs to the elongation factor P family.

In Stenotrophomonas maltophilia (strain K279a), this protein is Elongation factor P-like protein.